We begin with the raw amino-acid sequence, 154 residues long: Superoxide dismutase [Cu-Zn] (154 aa).

Cu cation-binding residues include H47, H49, and H64. Residues C58 and C147 are joined by a disulfide bond. Residues H64, H72, H81, and D84 each coordinate Zn(2+). H121 lines the Cu cation pocket. Residues 125-136 (DDLGKGGNEESL) are compositionally biased toward basic and acidic residues. Residues 125-144 (DDLGKGGNEESLKTGNAGPR) form a disordered region. R144 serves as a coordination point for substrate.

It belongs to the Cu-Zn superoxide dismutase family. Homodimer. It depends on Cu cation as a cofactor. Zn(2+) serves as cofactor.

The protein localises to the cytoplasm. It catalyses the reaction 2 superoxide + 2 H(+) = H2O2 + O2. Its function is as follows. Destroys radicals which are normally produced within the cells and which are toxic to biological systems. This is Superoxide dismutase [Cu-Zn] (SOD1) from Cordyceps tenuipes (Entomopathogenic fungus).